The chain runs to 248 residues: 3-deoxy-manno-octulosonate cytidylyltransferase (248 aa).

It belongs to the KdsB family.

The protein resides in the cytoplasm. The catalysed reaction is 3-deoxy-alpha-D-manno-oct-2-ulosonate + CTP = CMP-3-deoxy-beta-D-manno-octulosonate + diphosphate. It functions in the pathway nucleotide-sugar biosynthesis; CMP-3-deoxy-D-manno-octulosonate biosynthesis; CMP-3-deoxy-D-manno-octulosonate from 3-deoxy-D-manno-octulosonate and CTP: step 1/1. The protein operates within bacterial outer membrane biogenesis; lipopolysaccharide biosynthesis. Functionally, activates KDO (a required 8-carbon sugar) for incorporation into bacterial lipopolysaccharide in Gram-negative bacteria. The chain is 3-deoxy-manno-octulosonate cytidylyltransferase from Shigella dysenteriae serotype 1 (strain Sd197).